The primary structure comprises 555 residues: Protein FAM234A (555 aa).

Residues Met1 to Gln22 are compositionally biased toward basic and acidic residues. Residues Met1–Val40 are disordered. At Met1–Thr49 the chain is on the cytoplasmic side. The residue at position 21 (Ser21) is a Phosphoserine. The chain crosses the membrane as a helical; Signal-anchor for type II membrane protein span at residues Val50 to Ile70. Topologically, residues Pro71–Met555 are extracellular. Asn116, Asn120, Asn317, Asn392, and Asn476 each carry an N-linked (GlcNAc...) asparagine glycan.

It belongs to the FAM234 family.

The protein resides in the membrane. This chain is Protein FAM234A, found in Mus musculus (Mouse).